Here is a 279-residue protein sequence, read N- to C-terminus: Large ribosomal subunit protein mL46 (279 aa).

Residue K230 is modified to N6-acetyllysine.

Belongs to the mitochondrion-specific ribosomal protein mL46 family. In terms of assembly, component of the mitochondrial large ribosomal subunit (mt-LSU). Mature mammalian 55S mitochondrial ribosomes consist of a small (28S) and a large (39S) subunit. The 28S small subunit contains a 12S ribosomal RNA (12S mt-rRNA) and 30 different proteins. The 39S large subunit contains a 16S rRNA (16S mt-rRNA), a copy of mitochondrial valine transfer RNA (mt-tRNA(Val)), which plays an integral structural role, and 52 different proteins. mL46 is located at the central protuberance.

The protein localises to the mitochondrion. The polypeptide is Large ribosomal subunit protein mL46 (MRPL46) (Homo sapiens (Human)).